The following is a 230-amino-acid chain: MSDDSSETRTGGRRGADAGLTERQRTILEVIRASVTSRGYPPSIREIGDAVGLTSTSSVAHQLRTLERKGYLRRDPNRPRAVDVRLSDEPATPVVTTDVAGSDALPEPTFVPVLGRIAAGGPILAEEAVEDVFPLPRELVGEGSLFLLKVVGDSMVDAAICDGDWVVVRQQAVADNGDIVAAMIDGEATVKTFKRSRGQVWLMPHNPAFEPIPGNDAAVLGKVVTVIRKI.

The tract at residues 1 to 21 (MSDDSSETRTGGRRGADAGLT) is disordered. A DNA-binding region (H-T-H motif) is located at residues 44 to 64 (IREIGDAVGLTSTSSVAHQLR). Catalysis depends on for autocatalytic cleavage activity residues S154 and K191.

It belongs to the peptidase S24 family. Homodimer.

It catalyses the reaction Hydrolysis of Ala-|-Gly bond in repressor LexA.. Functionally, represses a number of genes involved in the response to DNA damage (SOS response), including recA and lexA. In the presence of single-stranded DNA, RecA interacts with LexA causing an autocatalytic cleavage which disrupts the DNA-binding part of LexA, leading to derepression of the SOS regulon and eventually DNA repair. The protein is LexA repressor of Mycobacterium sp. (strain JLS).